A 707-amino-acid polypeptide reads, in one-letter code: Translation initiation factor eIF2B subunit epsilon (707 aa).

Disordered regions lie at residues 489–526 and 686–707; these read HDDI…SVKF and AEEE…DESD. The region spanning 516–693 is the W2 domain; sequence DNPIEPDSVK…KSAEEESDDS (178 aa). The span at 688-707 shows a compositional bias: acidic residues; sequence EESDDSDDSDDDDDDSDESD.

It belongs to the eIF-2B gamma/epsilon subunits family. As to quaternary structure, component of the translation initiation factor 2B (eIF2B) complex which is a heterodecamer of two sets of five different subunits: alpha, beta, gamma, delta and epsilon. Subunits alpha, beta and delta comprise a regulatory subcomplex and subunits epsilon and gamma comprise a catalytic subcomplex. Within the complex, the hexameric regulatory complex resides at the center, with the two heterodimeric catalytic subcomplexes bound on opposite sides.

The protein resides in the cytoplasm. Its subcellular location is the cytosol. Functionally, acts as a component of the translation initiation factor 2B (eIF2B) complex, which catalyzes the exchange of GDP for GTP on eukaryotic initiation factor 2 (eIF2) gamma subunit. Its guanine nucleotide exchange factor activity is repressed when bound to eIF2 complex phosphorylated on the alpha subunit, thereby limiting the amount of methionyl-initiator methionine tRNA available to the ribosome and consequently global translation is repressed. The chain is Translation initiation factor eIF2B subunit epsilon (eif2b5) from Dictyostelium discoideum (Social amoeba).